A 192-amino-acid chain; its full sequence is ADP-ribosylation factor-like protein 4C (192 aa).

Residue Gly2 is the site of N-myristoyl glycine attachment. Residues 20 to 27 (GLDSAGKT), 68 to 72 (DVGGQ), and 127 to 130 (NKQD) each bind GTP.

Belongs to the small GTPase superfamily. Arf family. Interacts with CYTH2. Interacts with alpha tubulin; interaction is independent on the ARL4C GTP or GDP binding status. As to expression, expressed in several tumor cell lines (at protein level). Expressed in lung, brain, leukocytes and placenta.

Its subcellular location is the cell projection. The protein localises to the filopodium. It localises to the cell membrane. The protein resides in the cytoplasm. Its function is as follows. Small GTP-binding protein which cycles between an inactive GDP-bound and an active GTP-bound form, and the rate of cycling is regulated by guanine nucleotide exchange factors (GEF) and GTPase-activating proteins (GAP). GTP-binding protein that does not act as an allosteric activator of the cholera toxin catalytic subunit. May be involved in transport between a perinuclear compartment and the plasma membrane, apparently linked to the ABCA1-mediated cholesterol secretion pathway. Recruits CYTH1, CYTH2, CYTH3 and CYTH4 to the plasma membrane in the GDP-bound form. Regulates the microtubule-dependent intracellular vesicular transport from early endosome to recycling endosome process. The chain is ADP-ribosylation factor-like protein 4C (ARL4C) from Homo sapiens (Human).